The sequence spans 173 residues: dCTP deaminase, dUMP-forming (173 aa).

Residues 93 to 98, Asp-111, 119 to 121, Gln-138, and Tyr-151 each bind dCTP; these read RSSTGR and TLE. The active-site Proton donor/acceptor is Glu-121.

This sequence belongs to the dCTP deaminase family. In terms of assembly, homotrimer.

The catalysed reaction is dCTP + 2 H2O = dUMP + NH4(+) + diphosphate. Its pathway is pyrimidine metabolism; dUMP biosynthesis; dUMP from dCTP: step 1/1. Bifunctional enzyme that catalyzes both the deamination of dCTP to dUTP and the hydrolysis of dUTP to dUMP without releasing the toxic dUTP intermediate. In Clostridium beijerinckii (strain ATCC 51743 / NCIMB 8052) (Clostridium acetobutylicum), this protein is dCTP deaminase, dUMP-forming.